The primary structure comprises 419 residues: MSRYVFTSESVTEGHPDKICDQVSDAVLDALLAQDSTSRVACETVVNTGLCMITGEVTSKAQVDFIHLVRDVIRDIGYSGARAGGFDATSCAVLVALDQQSPDIAQGVDEADDHAGDPLDKVGAGDQGIMFGYACNETPELMPLPISLAHRLARRLAEVRHNGTLDYLLPDGKTQVSVVYENDKPVEIDTILISTQHTAEVTGLTDEQEVRNRISEDLWTHVVLPATADLPLKPDRANCRYLVNPTGKFVVGGPQGDAGLTGRKIIVDTYGGYARHGGGAFSGKDPTKVDRSAAYAARYVAKALVAAGLANRAEVQLSYAIGVAKPVSILVESFGSGKVSNAELTDLVQEHFDLRPGAIIEQFKLREMPSLNGGRFYRDTAAYGHFGRPDLNLPWEDVGDKAASLKQAEANRIQSGSSL.

Residue H15 participates in ATP binding. D17 is a Mg(2+) binding site. E43 is a binding site for K(+). The L-methionine site is built by E56 and Q100. Positions 100–110 (QSPDIAQGVDE) are flexible loop. ATP is bound by residues 171 to 173 (DGK), 248 to 249 (KF), D257, 263 to 264 (RK), A280, and K284. D257 is a binding site for L-methionine. L-methionine is bound at residue K288.

It belongs to the AdoMet synthase family. As to quaternary structure, homotetramer; dimer of dimers. The cofactor is Mg(2+). Requires K(+) as cofactor.

Its subcellular location is the cytoplasm. The catalysed reaction is L-methionine + ATP + H2O = S-adenosyl-L-methionine + phosphate + diphosphate. The protein operates within amino-acid biosynthesis; S-adenosyl-L-methionine biosynthesis; S-adenosyl-L-methionine from L-methionine: step 1/1. Functionally, catalyzes the formation of S-adenosylmethionine (AdoMet) from methionine and ATP. The overall synthetic reaction is composed of two sequential steps, AdoMet formation and the subsequent tripolyphosphate hydrolysis which occurs prior to release of AdoMet from the enzyme. The polypeptide is S-adenosylmethionine synthase (Synechococcus sp. (strain CC9311)).